The sequence spans 375 residues: Tubulinyl-Tyr carboxypeptidase 1 (375 aa).

A compositionally biased stretch (low complexity) spans 1-33; sequence MPGGKKVVPSGSSSASPNAAATTTAAAAAAAAA. A disordered region spans residues 1–69; it reads MPGGKKVVPS…EEDLRDGGVP (69 aa). The span at 53–63 shows a compositional bias: acidic residues; it reads EEPEEEGEEDL. Active-site residues include C179, H214, and S231. The disordered stretch occupies residues 309–375; it reads RDMRLKIGKG…PDLSGYQIRV (67 aa). Positions 329–375 are involved in heparin-binding and antiangiogenic activity; the sequence is KKDVSSPQRAQSSPHRRNSRSERRPSGEKKPAEPKAMPDLSGYQIRV. The segment covering 347-361 has biased composition (basic and acidic residues); sequence SRSERRPSGEKKPAE.

This sequence belongs to the transglutaminase-like superfamily. Vasohibin family. In terms of assembly, interacts with SVBP; interaction enhances VASH1 tyrosine carboxypeptidase activity. Ubiquitinated in vitro. Expressed at low level in proliferating endothelial cells at the sprouting front but highly expressed in nonproliferating endothelial cells in the termination zone.

The protein resides in the cytoplasm. Its subcellular location is the secreted. The enzyme catalyses C-terminal L-alpha-aminoacyl-L-glutamyl-L-glutamyl-L-tyrosyl-[tubulin] + H2O = C-terminal L-alpha-aminoacyl-L-glutamyl-L-glutamyl-[tubulin] + L-tyrosine. Tyrosine carboxypeptidase that removes the C-terminal tyrosine residue of alpha-tubulin, thereby regulating microtubule dynamics and function. Acts as an angiogenesis inhibitor: inhibits migration, proliferation and network formation by endothelial cells as well as angiogenesis. This inhibitory effect is selective to endothelial cells as it does not affect the migration of smooth muscle cells or fibroblasts. The chain is Tubulinyl-Tyr carboxypeptidase 1 from Mus musculus (Mouse).